The chain runs to 310 residues: MDRLLRLGGGMPGLGQGPPTDAPAVDTAEQVYISSLALLKMLKHGRAGVPMEVMGLMLGEFVDDYTVRVIDVFAMPQSGTGVSVEAVDPVFQAKMLDMLKQTGRPEMVVGWYHSHPGFGCWLSGVDINTQQSFEALSERAVAVVVDPIQSVKGKVVIDAFRLINANMMVLGHEPRQTTSNLGHLNKPSIQALIHGLNRHYYSITINYRKNELEQKMLLNLHKKSWMEGLTLQDYSEHCKHNESVVKEMLELAKNYNKAVEEEDKMTPEQLAIKNVGKQDPKRHLEEHVDVLMTSNIVQCLAAMLDTVVFK.

One can recognise an MPN domain in the interval 31 to 166 (VYISSLALLK…IDAFRLINAN (136 aa)). Residues H113, H115, and D126 each contribute to the Zn(2+) site. Positions 113–126 (HSHPGFGCWLSGVD) match the JAMM motif motif. Residues S150 and S224 each carry the phosphoserine modification. Position 266 is a phosphothreonine (T266).

It belongs to the peptidase M67A family. PSMD14 subfamily. As to quaternary structure, component of the 19S proteasome regulatory particle complex. The 26S proteasome consists of a 20S core particle (CP) and two 19S regulatory subunits (RP). The regulatory particle is made of a lid composed of 9 subunits including PSMD4, a base containing 6 ATPases and few additional components. Within the complex, PSMD4 interacts with subunit PSMD7 through their respective MPN domain. Interacts with TXNL1. As to expression, widely expressed. Highest levels in heart and skeletal muscle.

Its function is as follows. Component of the 26S proteasome, a multiprotein complex involved in the ATP-dependent degradation of ubiquitinated proteins. This complex plays a key role in the maintenance of protein homeostasis by removing misfolded or damaged proteins, which could impair cellular functions, and by removing proteins whose functions are no longer required. Therefore, the proteasome participates in numerous cellular processes, including cell cycle progression, apoptosis, or DNA damage repair. The PSMD14 subunit is a metalloprotease that specifically cleaves 'Lys-63'-linked polyubiquitin chains within the complex. Plays a role in response to double-strand breaks (DSBs): acts as a regulator of non-homologous end joining (NHEJ) by cleaving 'Lys-63'-linked polyubiquitin, thereby promoting retention of JMJD2A/KDM4A on chromatin and restricting TP53BP1 accumulation. Also involved in homologous recombination repair by promoting RAD51 loading. The sequence is that of 26S proteasome non-ATPase regulatory subunit 14 (PSMD14) from Homo sapiens (Human).